Consider the following 23-residue polypeptide: Basic phospholipase A2 homolog (23 aa).

Contains 7 disulfide bonds. In terms of tissue distribution, expressed by the venom gland.

Its subcellular location is the secreted. In Trimeresurus stejnegeri (Chinese green tree viper), this protein is Basic phospholipase A2 homolog.